A 552-amino-acid chain; its full sequence is CTP synthase (552 aa).

The segment at 1-267 (MSKFVFVTGG…AHQTLELLRM (267 aa)) is amidoligase domain. A CTP-binding site is contributed by serine 13. Serine 13 contacts UTP. Residues 14–19 (SIGKGI) and aspartate 71 contribute to the ATP site. Residues aspartate 71 and glutamate 141 each contribute to the Mg(2+) site. Residues 148–150 (DIE), 188–193 (KTKPTQ), and lysine 224 each bind CTP. Residues 188 to 193 (KTKPTQ) and lysine 224 each bind UTP. The Glutamine amidotransferase type-1 domain occupies 292-534 (TVALVGKYVQ…INAVLKRRNA (243 aa)). An L-glutamine-binding site is contributed by glycine 354. Residue cysteine 381 is the Nucleophile; for glutamine hydrolysis of the active site. L-glutamine is bound by residues 382 to 385 (LGMQ), glutamate 405, and arginine 462. Active-site residues include histidine 507 and glutamate 509.

It belongs to the CTP synthase family. In terms of assembly, homotetramer.

The catalysed reaction is UTP + L-glutamine + ATP + H2O = CTP + L-glutamate + ADP + phosphate + 2 H(+). It catalyses the reaction L-glutamine + H2O = L-glutamate + NH4(+). It carries out the reaction UTP + NH4(+) + ATP = CTP + ADP + phosphate + 2 H(+). It functions in the pathway pyrimidine metabolism; CTP biosynthesis via de novo pathway; CTP from UDP: step 2/2. Its activity is regulated as follows. Allosterically activated by GTP, when glutamine is the substrate; GTP has no effect on the reaction when ammonia is the substrate. The allosteric effector GTP functions by stabilizing the protein conformation that binds the tetrahedral intermediate(s) formed during glutamine hydrolysis. Inhibited by the product CTP, via allosteric rather than competitive inhibition. Catalyzes the ATP-dependent amination of UTP to CTP with either L-glutamine or ammonia as the source of nitrogen. Regulates intracellular CTP levels through interactions with the four ribonucleotide triphosphates. This is CTP synthase from Synechocystis sp. (strain ATCC 27184 / PCC 6803 / Kazusa).